A 259-amino-acid chain; its full sequence is tRNA (guanine-N(1)-)-methyltransferase (259 aa).

Residues G113 and I133–L138 each bind S-adenosyl-L-methionine.

It belongs to the RNA methyltransferase TrmD family. Homodimer.

The protein resides in the cytoplasm. The catalysed reaction is guanosine(37) in tRNA + S-adenosyl-L-methionine = N(1)-methylguanosine(37) in tRNA + S-adenosyl-L-homocysteine + H(+). In terms of biological role, specifically methylates guanosine-37 in various tRNAs. The protein is tRNA (guanine-N(1)-)-methyltransferase of Xanthomonas oryzae pv. oryzae (strain MAFF 311018).